The chain runs to 98 residues: NADH-ubiquinone oxidoreductase chain 4L (98 aa).

Transmembrane regions (helical) follow at residues 1-21 (MSMV…GLLM), 29-49 (SLLC…VTIL), and 61-81 (IILL…LVMV).

This sequence belongs to the complex I subunit 4L family. As to quaternary structure, core subunit of respiratory chain NADH dehydrogenase (Complex I) which is composed of 45 different subunits.

Its subcellular location is the mitochondrion inner membrane. The catalysed reaction is a ubiquinone + NADH + 5 H(+)(in) = a ubiquinol + NAD(+) + 4 H(+)(out). In terms of biological role, core subunit of the mitochondrial membrane respiratory chain NADH dehydrogenase (Complex I) which catalyzes electron transfer from NADH through the respiratory chain, using ubiquinone as an electron acceptor. Part of the enzyme membrane arm which is embedded in the lipid bilayer and involved in proton translocation. This chain is NADH-ubiquinone oxidoreductase chain 4L (MT-ND4L), found in Eumetopias jubatus (Steller sea lion).